A 704-amino-acid polypeptide reads, in one-letter code: Glycogen [starch] synthase, liver (704 aa).

Phosphoserine is present on residues S8 and S11. K40 is a UDP binding site. 2 residues coordinate UDP-alpha-D-glucose: H205 and R211. Residues H291, E292, Q294, H297, and K301 each coordinate alpha-D-glucose 6-phosphate. Position 331 (R331) interacts with UDP. R331 lines the UDP-alpha-D-glucose pocket. H501 lines the alpha-D-glucose 6-phosphate pocket. Residues E510, W512, and G513 each coordinate UDP-alpha-D-glucose. T515 provides a ligand contact to UDP. Residues R582 and R586 each contribute to the alpha-D-glucose 6-phosphate site. The segment at 620 to 704 (KFHLEPTSPP…KKKLHGEYKN (85 aa)) is disordered. Residue S627 is modified to Phosphoserine. A phosphoserine; by GSK3-alpha and GSK3-beta mark is found at S641, S645, S649, and S653. A compositionally biased stretch (low complexity) spans 647-657 (SGSQTSSPQSS). S657 bears the Phosphoserine; by CK2 mark. Acidic residues predominate over residues 659-675 (VENEGDEDERYDEEEEA). A Phosphoserine modification is found at S684.

It belongs to the glycosyltransferase 3 family. In terms of assembly, part of the glycogen synthase (GS)-glycogenin complex, a heterooctamer composed of a tetramer of GS and 2 dimers of glycogenin, where each GS protomer binds to one glycogenin subunit (via glycogenin C-terminus); the GS tetramer may dissociate from glycogenin dimers to continue glycogen polymerization on its own. May also form a heterooctamer complex with GYG1 (via GYG1 C-terminus). Post-translationally, primed phosphorylation at Ser-657 (site 5) by CSNK2A1 and CSNK2A2 is required for inhibitory phosphorylation at Ser-641 (site 3a), Ser-645 (site 3b), Ser-649 (site 3c) and Ser-653 (site 4) by GSK3A an GSK3B. Dephosphorylation at Ser-641 and Ser-645 by PP1 activates the enzyme. Phosphorylation at Ser-8 is not required for interaction with GYG1. Interaction with GYG1 does not regulate the phosphorylation at Ser-8 and Ser-641. Specifically expressed in liver (at protein level).

The enzyme catalyses [(1-&gt;4)-alpha-D-glucosyl](n) + UDP-alpha-D-glucose = [(1-&gt;4)-alpha-D-glucosyl](n+1) + UDP + H(+). The protein operates within glycan biosynthesis; glycogen biosynthesis. With respect to regulation, allosteric activation by glucose-6-phosphate. Phosphorylation reduces the activity towards UDP-glucose. When in the non-phosphorylated state, glycogen synthase does not require glucose-6-phosphate as an allosteric activator; when phosphorylated it does. Functionally, glycogen synthase participates in the glycogen biosynthetic process along with glycogenin and glycogen branching enzyme. Extends the primer composed of a few glucose units formed by glycogenin by adding new glucose units to it. In this context, glycogen synthase transfers the glycosyl residue from UDP-Glc to the non-reducing end of alpha-1,4-glucan. This Rattus norvegicus (Rat) protein is Glycogen [starch] synthase, liver.